Consider the following 542-residue polypeptide: Phosphoenolpyruvate carboxykinase (ATP) (542 aa).

The substrate site is built by R67, Y208, and K214. ATP contacts are provided by residues K214, H233, and 249 to 257; that span reads GLSGTGKTT. K214 and H233 together coordinate Mn(2+). Residue D270 participates in Mn(2+) binding. ATP contacts are provided by residues E298, R334, 450–451, and T456; that span reads RI. R334 contacts substrate.

This sequence belongs to the phosphoenolpyruvate carboxykinase (ATP) family. As to quaternary structure, monomer. The cofactor is Mn(2+).

It localises to the cytoplasm. The enzyme catalyses oxaloacetate + ATP = phosphoenolpyruvate + ADP + CO2. Its pathway is carbohydrate biosynthesis; gluconeogenesis. Its function is as follows. Involved in the gluconeogenesis. Catalyzes the conversion of oxaloacetate (OAA) to phosphoenolpyruvate (PEP) through direct phosphoryl transfer between the nucleoside triphosphate and OAA. This chain is Phosphoenolpyruvate carboxykinase (ATP), found in Vibrio vulnificus (strain YJ016).